Consider the following 673-residue polypeptide: MDPQRSPLLEVKGNIELKRPLIKAPSQLPLSGSRLKRRPDQMEDGLEPEKKRTRGLGATTKITTSHPRVPSLTTVPQTQGQTTAQKVSKKTGPRCSTAIATGLKNQKPVPAVPVQKSGTSGVPPMAGGKKPSKRPAWDLKGQLCDLNAELKRCRERTQTLDQENQQLQDQLRDAQQQVKALGTERTTLEGHLAKVQAQAEQGQQELKNLRACVLELEERLSTQEGLVQELQKKQVELQEERRGLMSQLEEKERRLQTSEAALSSSQAEVASLRQETVAQAALLTEREERLHGLEMERRRLHNQLQELKGNIRVFCRVRPVLPGEPTPPPGLLLFPSGPGGPSDPPTRLSLSRSDERRGTLSGAPAPPTRHDFSFDRVFPPGSGQDEVFEEIAMLVQSALDGYPVCIFAYGQTGSGKTFTMEGGPGGDPQLEGLIPRALRHLFSVAQELSGQGWTYSFVASYVEIYNETVRDLLATGTRKGQGGECEIRRAGPGSEELTVTNARYVPVSCEKEVDALLHLARQNRAVARTAQNERSSRSHSVFQLQISGEHSSRGLQCGAPLSLVDLAGSERLDPGLALGPGERERLRETQAINSSLSTLGLVIMALSNKESHVPYRNSKLTYLLQNSLGGSAKMLMFVNISPLEENVSESLNSLRFASKVNQCVIGTAQANRK.

Phosphoserine is present on residues serine 6, serine 26, serine 31, and serine 33. Disordered stretches follow at residues 23-94 (KAPS…TGPR) and 109-136 (VPAV…KRPA). The span at 60–86 (TKITTSHPRVPSLTTVPQTQGQTTAQK) shows a compositional bias: polar residues. The stretch at 142-306 (QLCDLNAELK…RRRLHNQLQE (165 aa)) forms a coiled coil. A Kinesin motor domain is found at 310-663 (NIRVFCRVRP…LRFASKVNQC (354 aa)). A disordered region spans residues 325–372 (PTPPPGLLLFPSGPGGPSDPPTRLSLSRSDERRGTLSGAPAPPTRHDF). Threonine 359 carries the post-translational modification Phosphothreonine. 410–417 (GQTGSGKT) lines the ATP pocket.

It belongs to the TRAFAC class myosin-kinesin ATPase superfamily. Kinesin family. NCD subfamily. In terms of assembly, binds NUBP1 and NUBP2. Interacts with PPP1R42.

It is found in the nucleus. The protein localises to the cytoplasm. It localises to the cytoskeleton. The protein resides in the microtubule organizing center. Its subcellular location is the centrosome. It is found in the spindle. The protein localises to the early endosome. In terms of biological role, minus end-directed microtubule-dependent motor required for bipolar spindle formation. May contribute to movement of early endocytic vesicles. Regulates cilium formation and structure. This Homo sapiens (Human) protein is Kinesin-like protein KIFC1 (KIFC1).